Reading from the N-terminus, the 218-residue chain is MRLSQSVLTALLICVNSAAFANVEVTLPSNSELVLVNGKESDSTDKLTLENGENQLALRYIGRYQQQGSQTQFSSDVIIMTFLAENTSLTIALPRIRSNSAADAFNRDPKISLKNSSEVDIAFRQDKLLKEGMQLGRDYEKEVAEYNSNNQVASVAALAPSITALVQAKPVVIENHGQPKNTINQSDQVNVGQMLDFWYQQADEETRKAFKLKINSKE.

The N-terminal stretch at 1–21 (MRLSQSVLTALLICVNSAAFA) is a signal peptide.

This sequence belongs to the UPF0319 family.

The chain is UPF0319 protein swp_2242 from Shewanella piezotolerans (strain WP3 / JCM 13877).